We begin with the raw amino-acid sequence, 509 residues long: ATP synthase subunit alpha (509 aa).

Position 169–176 (169–176 (GDRQTGKT)) interacts with ATP.

This sequence belongs to the ATPase alpha/beta chains family. In terms of assembly, F-type ATPases have 2 components, CF(1) - the catalytic core - and CF(0) - the membrane proton channel. CF(1) has five subunits: alpha(3), beta(3), gamma(1), delta(1), epsilon(1). CF(0) has four main subunits: a(1), b(1), b'(1) and c(9-12).

Its subcellular location is the cellular chromatophore membrane. The catalysed reaction is ATP + H2O + 4 H(+)(in) = ADP + phosphate + 5 H(+)(out). Its function is as follows. Produces ATP from ADP in the presence of a proton gradient across the membrane. The alpha chain is a regulatory subunit. This Rhodobacter capsulatus (Rhodopseudomonas capsulata) protein is ATP synthase subunit alpha.